Reading from the N-terminus, the 456-residue chain is Phospholipase A1 member A (456 aa).

Residues 1–25 (MRPGLWETCFWLWGPLLWLSIGSSG) form the signal peptide. S166 (nucleophile) is an active-site residue. D190 acts as the Charge relay system in catalysis. The cysteines at positions 245 and 258 are disulfide-linked. H260 functions as the Charge relay system in the catalytic mechanism. Disulfide bonds link C282/C293 and C296/C304. N365 carries N-linked (GlcNAc...) asparagine glycosylation.

This sequence belongs to the AB hydrolase superfamily. Lipase family.

It localises to the secreted. The enzyme catalyses a 1,2-diacyl-sn-glycero-3-phospho-L-serine + H2O = a 2-acyl-sn-glycero-3-phospho-L-serine + a fatty acid + H(+). It carries out the reaction 1,2-di-(9Z)-octadecenoyl-sn-glycero-3-phospho-L-serine + H2O = 2-(9Z-octadecenoyl)-sn-glycero-3-phospho-L-serine + (9Z)-octadecenoate + H(+). The catalysed reaction is 1-hexadecanoyl-2-(5Z,8Z,11Z,14Z-eicosatetraenoyl)-sn-glycero-3-phospho-L-serine + H2O = 2-(5Z,8Z,11Z,14Z)-eicosatetraenoyl-sn-glycero-3-phospho-L-serine + hexadecanoate + H(+). It catalyses the reaction a 1-acyl-sn-glycero-3-phospho-L-serine + H2O = sn-glycero-3-phospho-L-serine + a fatty acid + H(+). The enzyme catalyses 1-(9Z-octadecenoyl)-sn-glycero-3-phospho-L-serine + H2O = sn-glycero-3-phospho-L-serine + (9Z)-octadecenoate + H(+). Hydrolyzes the ester bond of the acyl group attached at the sn-1 position of phosphatidylserines (phospholipase A1 activity) and 1-acyl-2-lysophosphatidylserines (lysophospholipase activity) in the pathway of phosphatidylserines acyl chain remodeling. Cleaves phosphatidylserines exposed on the outer leaflet of the plasma membrane of apoptotic cells producing 2-acyl-1-lysophosphatidylserines, which in turn enhance mast cell activation and histamine production. Has no activity toward other glycerophospholipids including phosphatidylcholines, phosphatidylethanolamines, phosphatidic acids or phosphatidylinositols, or glycerolipids such as triolein. This Mus musculus (Mouse) protein is Phospholipase A1 member A.